Here is a 204-residue protein sequence, read N- to C-terminus: Leucyl/phenylalanyl-tRNA--protein transferase (204 aa).

It belongs to the L/F-transferase family.

The protein resides in the cytoplasm. It carries out the reaction N-terminal L-lysyl-[protein] + L-leucyl-tRNA(Leu) = N-terminal L-leucyl-L-lysyl-[protein] + tRNA(Leu) + H(+). The enzyme catalyses N-terminal L-arginyl-[protein] + L-leucyl-tRNA(Leu) = N-terminal L-leucyl-L-arginyl-[protein] + tRNA(Leu) + H(+). It catalyses the reaction L-phenylalanyl-tRNA(Phe) + an N-terminal L-alpha-aminoacyl-[protein] = an N-terminal L-phenylalanyl-L-alpha-aminoacyl-[protein] + tRNA(Phe). Functionally, functions in the N-end rule pathway of protein degradation where it conjugates Leu, Phe and, less efficiently, Met from aminoacyl-tRNAs to the N-termini of proteins containing an N-terminal arginine or lysine. This Sinorhizobium fredii (strain NBRC 101917 / NGR234) protein is Leucyl/phenylalanyl-tRNA--protein transferase.